We begin with the raw amino-acid sequence, 140 residues long: Peptidyl-prolyl cis-trans isomerase FKBP2 (140 aa).

Residues 1 to 20 form the signal peptide; the sequence is MRLSWVLTVLSICLSALVTA. Positions 47-135 constitute a PPIase FKBP-type domain; that stretch reads GDVLHMHYTG…VFEVELLKIE (89 aa).

The protein belongs to the FKBP-type PPIase family. FKBP2 subfamily. Interacts with ARFGEF1/BIG1 and the C-terminal of EPB41L2.

The protein resides in the endoplasmic reticulum membrane. The catalysed reaction is [protein]-peptidylproline (omega=180) = [protein]-peptidylproline (omega=0). Its activity is regulated as follows. Inhibited by both FK506 and rapamycin. Functionally, PPIases accelerate the folding of proteins. It catalyzes the cis-trans isomerization of proline imidic peptide bonds in oligopeptides. This Bos taurus (Bovine) protein is Peptidyl-prolyl cis-trans isomerase FKBP2 (FKBP2).